The chain runs to 399 residues: Methylthioribose kinase (399 aa).

ATP contacts are provided by residues Asn-40, Lys-57, and 111–113 (EDL). Asp-229 serves as a coordination point for substrate. 246 to 248 (DAE) contacts ATP. Residue Arg-344 participates in substrate binding.

The protein belongs to the methylthioribose kinase family. Homodimer.

It catalyses the reaction 5-(methylsulfanyl)-D-ribose + ATP = 5-(methylsulfanyl)-alpha-D-ribose 1-phosphate + ADP + H(+). It functions in the pathway amino-acid biosynthesis; L-methionine biosynthesis via salvage pathway; S-methyl-5-thio-alpha-D-ribose 1-phosphate from S-methyl-5'-thioadenosine (hydrolase route): step 2/2. Its function is as follows. Catalyzes the phosphorylation of methylthioribose into methylthioribose-1-phosphate. The sequence is that of Methylthioribose kinase from Yersinia enterocolitica serotype O:8 / biotype 1B (strain NCTC 13174 / 8081).